A 901-amino-acid chain; its full sequence is HTH-type transcriptional regulator MalT (901 aa).

39-46 (SPAGYGKT) contacts ATP. In terms of domain architecture, HTH luxR-type spans 829-894 (ELIRTSPLTQ…AAVQHAQKLL (66 aa)). The H-T-H motif DNA-binding region spans 853 to 872 (NEQIAGELEVAATTIKTHIR).

Belongs to the MalT family. As to quaternary structure, monomer in solution. Oligomerizes to an active state in the presence of the positive effectors ATP and maltotriose.

With respect to regulation, activated by ATP and maltotriose, which are both required for DNA binding. In terms of biological role, positively regulates the transcription of the maltose regulon whose gene products are responsible for uptake and catabolism of malto-oligosaccharides. Specifically binds to the promoter region of its target genes, recognizing a short DNA motif called the MalT box. In Shigella flexneri serotype 5b (strain 8401), this protein is HTH-type transcriptional regulator MalT.